The sequence spans 208 residues: Elongation factor Ts, chloroplastic (208 aa).

The protein belongs to the EF-Ts family.

The protein resides in the plastid. Its subcellular location is the chloroplast. Functionally, associates with the EF-Tu.GDP complex and induces the exchange of GDP to GTP. It remains bound to the aminoacyl-tRNA.EF-Tu.GTP complex up to the GTP hydrolysis stage on the ribosome. The polypeptide is Elongation factor Ts, chloroplastic (tsf) (Cyanidium caldarium (Red alga)).